The sequence spans 552 residues: Non-structural protein NS1 (552 aa).

It belongs to the orbivirus non-structural protein NS1 family.

The sequence is that of Non-structural protein NS1 (Segment-5) from Bluetongue virus 1 (isolate Australia) (BTV 1).